The sequence spans 342 residues: Platelet-activating factor receptor (342 aa).

Residues 1-16 are Extracellular-facing; it reads MELNSSSRVDSEFRYT. N-linked (GlcNAc...) asparagine glycosylation occurs at N4. A helical transmembrane segment spans residues 17-38; it reads LFPIVYSIIFVLGIIANGYVLW. The Cytoplasmic segment spans residues 39–54; the sequence is VFARLYPSKKLNEIKI. Residues 55 to 74 traverse the membrane as a helical segment; the sequence is FMVNLTVADLLFLITLPLWI. The Extracellular segment spans residues 75–91; the sequence is VYYSNQGNWFLPKFLCN. An intrachain disulfide couples C90 to C173. The helical transmembrane segment at 92 to 113 threads the bilayer; sequence LAGCLFFINTYCSVAFLGVITY. Residues 114-133 lie on the Cytoplasmic side of the membrane; the sequence is NRFQAVKYPIKTAQATTRKR. Residues 134 to 155 form a helical membrane-spanning segment; the sequence is GIALSLVIWVAIVAAASYFLVM. At 156 to 184 the chain is on the extracellular side; that stretch reads DSTNVVSNKAGSGNITRCFEHYEKGSKPV. N169 carries N-linked (GlcNAc...) asparagine glycosylation. The helical transmembrane segment at 185 to 205 threads the bilayer; sequence LIIHICIVLGFFIVFLLILFC. Topologically, residues 206–233 are cytoplasmic; that stretch reads NLVIIHTLLRQPVKQQRNAEVRRRALWM. Residues 234–254 form a helical membrane-spanning segment; it reads VCTVLAVFVICFVPHHMVQLP. Residues 255-276 are Extracellular-facing; the sequence is WTLAELGMWPSSNHQAINDAHQ. Residues 277–296 form a helical membrane-spanning segment; the sequence is VTLCLLSTNCVLDPVIYCFL. Topologically, residues 297–342 are cytoplasmic; sequence TKKFRKHLSEKLNIMRSSQKCSRVTTDTGTEMAIPINHTPVNPIKN.

This sequence belongs to the G-protein coupled receptor 1 family. Interacts with ARRB1.

Its subcellular location is the cell membrane. Functionally, receptor for platelet activating factor, a chemotactic phospholipid mediator that possesses potent inflammatory, smooth-muscle contractile and hypotensive activity. Seems to mediate its action via a G protein that activates a phosphatidylinositol-calcium second messenger system. In Cavia porcellus (Guinea pig), this protein is Platelet-activating factor receptor (PTAFR).